Consider the following 486-residue polypeptide: Glutamyl-tRNA(Gln) amidotransferase subunit A (486 aa).

Residues Lys-76 and Ser-151 each act as charge relay system in the active site. The Acyl-ester intermediate role is filled by Ser-175.

The protein belongs to the amidase family. GatA subfamily. Heterotrimer of A, B and C subunits.

It carries out the reaction L-glutamyl-tRNA(Gln) + L-glutamine + ATP + H2O = L-glutaminyl-tRNA(Gln) + L-glutamate + ADP + phosphate + H(+). Allows the formation of correctly charged Gln-tRNA(Gln) through the transamidation of misacylated Glu-tRNA(Gln) in organisms which lack glutaminyl-tRNA synthetase. The reaction takes place in the presence of glutamine and ATP through an activated gamma-phospho-Glu-tRNA(Gln). The chain is Glutamyl-tRNA(Gln) amidotransferase subunit A from Marinomonas sp. (strain MWYL1).